The chain runs to 370 residues: 4-hydroxy-3-methylbut-2-en-1-yl diphosphate synthase (flavodoxin) (370 aa).

Residues C270, C273, C305, and E312 each coordinate [4Fe-4S] cluster.

It belongs to the IspG family. The cofactor is [4Fe-4S] cluster.

The enzyme catalyses (2E)-4-hydroxy-3-methylbut-2-enyl diphosphate + oxidized [flavodoxin] + H2O + 2 H(+) = 2-C-methyl-D-erythritol 2,4-cyclic diphosphate + reduced [flavodoxin]. The protein operates within isoprenoid biosynthesis; isopentenyl diphosphate biosynthesis via DXP pathway; isopentenyl diphosphate from 1-deoxy-D-xylulose 5-phosphate: step 5/6. In terms of biological role, converts 2C-methyl-D-erythritol 2,4-cyclodiphosphate (ME-2,4cPP) into 1-hydroxy-2-methyl-2-(E)-butenyl 4-diphosphate. This Marinomonas sp. (strain MWYL1) protein is 4-hydroxy-3-methylbut-2-en-1-yl diphosphate synthase (flavodoxin).